A 283-amino-acid polypeptide reads, in one-letter code: Putative transposase InsK for insertion sequence element IS150 (283 aa).

In terms of domain architecture, Integrase catalytic spans 117–279; the sequence is KATRPNEKWV…TPIEYRNQTY (163 aa).

The protein belongs to the transposase IS3/IS150/IS904 family.

In terms of biological role, involved in the transposition of the insertion sequence IS150. The polypeptide is Putative transposase InsK for insertion sequence element IS150 (insK) (Escherichia coli (strain K12)).